The chain runs to 295 residues: Pyridoxal 5'-phosphate synthase subunit PdxS (295 aa).

A D-ribose 5-phosphate-binding site is contributed by Asp-25. The active-site Schiff-base intermediate with D-ribose 5-phosphate is the Lys-82. Gly-154 serves as a coordination point for D-ribose 5-phosphate. Arg-166 lines the D-glyceraldehyde 3-phosphate pocket. Residues Gly-215 and 236–237 (GS) contribute to the D-ribose 5-phosphate site.

Belongs to the PdxS/SNZ family. In terms of assembly, in the presence of PdxT, forms a dodecamer of heterodimers.

The catalysed reaction is aldehydo-D-ribose 5-phosphate + D-glyceraldehyde 3-phosphate + L-glutamine = pyridoxal 5'-phosphate + L-glutamate + phosphate + 3 H2O + H(+). It functions in the pathway cofactor biosynthesis; pyridoxal 5'-phosphate biosynthesis. Functionally, catalyzes the formation of pyridoxal 5'-phosphate from ribose 5-phosphate (RBP), glyceraldehyde 3-phosphate (G3P) and ammonia. The ammonia is provided by the PdxT subunit. Can also use ribulose 5-phosphate and dihydroxyacetone phosphate as substrates, resulting from enzyme-catalyzed isomerization of RBP and G3P, respectively. The protein is Pyridoxal 5'-phosphate synthase subunit PdxS of Pasteurella multocida (strain Pm70).